The sequence spans 267 residues: Ribosomal RNA small subunit methyltransferase A (267 aa).

S-adenosyl-L-methionine contacts are provided by Asn18, Leu20, Gly45, Glu66, Asp91, and Asn112.

Belongs to the class I-like SAM-binding methyltransferase superfamily. rRNA adenine N(6)-methyltransferase family. RsmA subfamily.

Its subcellular location is the cytoplasm. The enzyme catalyses adenosine(1518)/adenosine(1519) in 16S rRNA + 4 S-adenosyl-L-methionine = N(6)-dimethyladenosine(1518)/N(6)-dimethyladenosine(1519) in 16S rRNA + 4 S-adenosyl-L-homocysteine + 4 H(+). Specifically dimethylates two adjacent adenosines (A1518 and A1519) in the loop of a conserved hairpin near the 3'-end of 16S rRNA in the 30S particle. May play a critical role in biogenesis of 30S subunits. This is Ribosomal RNA small subunit methyltransferase A from Shewanella denitrificans (strain OS217 / ATCC BAA-1090 / DSM 15013).